Consider the following 455-residue polypeptide: 2-succinylbenzoate--CoA ligase (455 aa).

It belongs to the ATP-dependent AMP-binding enzyme family. MenE subfamily.

It catalyses the reaction 2-succinylbenzoate + ATP + CoA = 2-succinylbenzoyl-CoA + AMP + diphosphate. Its pathway is quinol/quinone metabolism; 1,4-dihydroxy-2-naphthoate biosynthesis; 1,4-dihydroxy-2-naphthoate from chorismate: step 5/7. It participates in quinol/quinone metabolism; menaquinone biosynthesis. Functionally, converts 2-succinylbenzoate (OSB) to 2-succinylbenzoyl-CoA (OSB-CoA). The protein is 2-succinylbenzoate--CoA ligase of Salmonella typhimurium (strain LT2 / SGSC1412 / ATCC 700720).